The chain runs to 246 residues: 4-aminobenzoate synthase (246 aa).

Fe(2+)-binding residues include glutamate 88, histidine 95, glutamate 149, histidine 181, aspartate 185, and histidine 188.

It belongs to the CADD family. In terms of assembly, homodimer. It depends on Fe(2+) as a cofactor. Requires Mn(2+) as cofactor.

Its function is as follows. Involved in de novo para-aminobenzoate (PABA) biosynthesis. Acts as a self-sacrificing or 'suicide' enzyme that utilizes its own active site tyrosine residue(s) as the substrate for PABA synthesis. The side chain of the tyrosine residue is released from the protein backbone via cleavage of the C(alpha)-C(beta) bond, leaving a glycine in place of the original tyrosine residue. Reaction requires O(2) and a reduced dimetal cofactor. This is 4-aminobenzoate synthase from Nitrosomonas europaea (strain ATCC 19718 / CIP 103999 / KCTC 2705 / NBRC 14298).